An 894-amino-acid chain; its full sequence is Alpha-actinin-2 (894 aa).

The actin-binding stretch occupies residues 1 to 254; the sequence is MNQIEPGVQY…IMTYVSCFYH (254 aa). Calponin-homology (CH) domains are found at residues 38–142 and 151–257; these read KQQR…LRFA and TSAK…HAFA. A Phosphothreonine modification is found at T237. Spectrin repeat units lie at residues 281 to 391, 401 to 506, 516 to 627, and 637 to 740; these read RLME…WLLN, HLAE…ALER, QLHL…SLQE, and RLRR…EVET. 2 EF-hand domains span residues 753–788 and 789–824; these read EQMN…MGYD and LGEA…ETAD. 6 residues coordinate Ca(2+): D766, N770, D777, D802, N804, and T808.

Belongs to the alpha-actinin family. As to quaternary structure, homodimer; antiparallel. Also forms heterodimers with ACTN3. Interacts with ADAM12, MYOZ1, MYOZ2 and MYOZ3. Interacts via its C-terminal region with the LDB3 PDZ domain. Interacts with XIRP2. Interacts with DST (via N-terminus). Interacts with PARVB. Interacts with SYNPO2. Post-translationally, ubiquitinated by FBXL22, leading to proteasomal degradation.

Its subcellular location is the cytoplasm. The protein localises to the myofibril. It localises to the sarcomere. The protein resides in the z line. F-actin cross-linking protein which is thought to anchor actin to a variety of intracellular structures. This is a bundling protein. In Mus musculus (Mouse), this protein is Alpha-actinin-2 (Actn2).